The following is a 372-amino-acid chain: Ligninase A (372 aa).

A signal peptide spans 1 to 21 (MAFKQLVAAISLALSLTTANA). Residues 22–28 (AVVKEKR) constitute a propeptide that is removed on maturation. Cystine bridges form between Cys-31/Cys-43, Cys-42/Cys-313, Cys-62/Cys-148, and Cys-277/Cys-345. His-75 serves as the catalytic Proton acceptor. Asp-76, Gly-94, Asp-96, and Ser-98 together coordinate Ca(2+). His-204 lines the heme b pocket. Ca(2+) contacts are provided by Ser-205, Asp-222, Thr-224, Ile-227, and Asp-229. Residue Asn-285 is glycosylated (N-linked (GlcNAc...) asparagine).

The protein belongs to the peroxidase family. Ligninase subfamily. The cofactor is heme b. It depends on Ca(2+) as a cofactor.

It catalyses the reaction 1-(3,4-dimethoxyphenyl)-2-(2-methoxyphenoxy)propane-1,3-diol + H2O2 = 3,4-dimethoxybenzaldehyde + guaiacol + glycolaldehyde + H2O. It carries out the reaction 2 (3,4-dimethoxyphenyl)methanol + H2O2 = 2 (3,4-dimethoxyphenyl)methanol radical + 2 H2O. It functions in the pathway secondary metabolite metabolism; lignin degradation. In terms of biological role, depolymerization of lignin. Catalyzes the C(alpha)-C(beta) cleavage of the propyl side chains of lignin. The protein is Ligninase A (LIPA) of Phanerodontia chrysosporium (White-rot fungus).